A 345-amino-acid polypeptide reads, in one-letter code: Anthranilate phosphoribosyltransferase (345 aa).

5-phospho-alpha-D-ribose 1-diphosphate contacts are provided by residues G84, 87–88 (GD), T92, 94–97 (NIST), 112–120 (KHGNRSVSS), and S124. G84 provides a ligand contact to anthranilate. S96 serves as a coordination point for Mg(2+). N115 lines the anthranilate pocket. R170 contacts anthranilate. Mg(2+) contacts are provided by D229 and E230.

The protein belongs to the anthranilate phosphoribosyltransferase family. In terms of assembly, homodimer. The cofactor is Mg(2+).

It catalyses the reaction N-(5-phospho-beta-D-ribosyl)anthranilate + diphosphate = 5-phospho-alpha-D-ribose 1-diphosphate + anthranilate. It participates in amino-acid biosynthesis; L-tryptophan biosynthesis; L-tryptophan from chorismate: step 2/5. Its function is as follows. Catalyzes the transfer of the phosphoribosyl group of 5-phosphorylribose-1-pyrophosphate (PRPP) to anthranilate to yield N-(5'-phosphoribosyl)-anthranilate (PRA). In Xanthomonas oryzae pv. oryzae (strain MAFF 311018), this protein is Anthranilate phosphoribosyltransferase.